A 296-amino-acid polypeptide reads, in one-letter code: Acetylglutamate kinase (296 aa).

Substrate contacts are provided by residues 69–70, Arg-91, and Asn-192; that span reads GG.

The protein belongs to the acetylglutamate kinase family. ArgB subfamily.

It localises to the cytoplasm. It carries out the reaction N-acetyl-L-glutamate + ATP = N-acetyl-L-glutamyl 5-phosphate + ADP. Its pathway is amino-acid biosynthesis; L-arginine biosynthesis; N(2)-acetyl-L-ornithine from L-glutamate: step 2/4. Its function is as follows. Catalyzes the ATP-dependent phosphorylation of N-acetyl-L-glutamate. The sequence is that of Acetylglutamate kinase from Ruthia magnifica subsp. Calyptogena magnifica.